Reading from the N-terminus, the 198-residue chain is Dynactin subunit 5 (198 aa).

Polar residues predominate over residues 179–188 (NTPASKGLPS). Residues 179–198 (NTPASKGLPSTPTKLQTTTT) are disordered. The span at 189-198 (TPTKLQTTTT) shows a compositional bias: low complexity.

This sequence belongs to the dynactin subunits 5/6 family. Dynactin subunit 5 subfamily. As to quaternary structure, member of the pointed-end complex of the dynactin shoulder complex.

It is found in the cytoplasm. The protein localises to the cytoskeleton. The sequence is that of Dynactin subunit 5 (dynE) from Dictyostelium discoideum (Social amoeba).